Consider the following 274-residue polypeptide: Hydroxyethylthiazole kinase (274 aa).

Residue Met49 participates in substrate binding. 2 residues coordinate ATP: Arg125 and Thr173. Gly200 is a substrate binding site.

This sequence belongs to the Thz kinase family. Requires Mg(2+) as cofactor.

The catalysed reaction is 5-(2-hydroxyethyl)-4-methylthiazole + ATP = 4-methyl-5-(2-phosphooxyethyl)-thiazole + ADP + H(+). The protein operates within cofactor biosynthesis; thiamine diphosphate biosynthesis; 4-methyl-5-(2-phosphoethyl)-thiazole from 5-(2-hydroxyethyl)-4-methylthiazole: step 1/1. Catalyzes the phosphorylation of the hydroxyl group of 4-methyl-5-beta-hydroxyethylthiazole (THZ). This is Hydroxyethylthiazole kinase from Desulfosudis oleivorans (strain DSM 6200 / JCM 39069 / Hxd3) (Desulfococcus oleovorans).